Consider the following 177-residue polypeptide: NADH-quinone oxidoreductase subunit B (177 aa).

[4Fe-4S] cluster is bound by residues C56, C57, C121, and C151.

This sequence belongs to the complex I 20 kDa subunit family. As to quaternary structure, NDH-1 is composed of 14 different subunits. Subunits NuoB, C, D, E, F, and G constitute the peripheral sector of the complex. [4Fe-4S] cluster serves as cofactor.

The protein localises to the cell inner membrane. It carries out the reaction a quinone + NADH + 5 H(+)(in) = a quinol + NAD(+) + 4 H(+)(out). In terms of biological role, NDH-1 shuttles electrons from NADH, via FMN and iron-sulfur (Fe-S) centers, to quinones in the respiratory chain. The immediate electron acceptor for the enzyme in this species is believed to be ubiquinone. Couples the redox reaction to proton translocation (for every two electrons transferred, four hydrogen ions are translocated across the cytoplasmic membrane), and thus conserves the redox energy in a proton gradient. This chain is NADH-quinone oxidoreductase subunit B, found in Rhodobacter capsulatus (Rhodopseudomonas capsulata).